Reading from the N-terminus, the 1095-residue chain is Formin-like protein 2 (1095 aa).

The 447-residue stretch at 23–469 (LPMPEPGELE…EAIQRQSTLE (447 aa)) folds into the GBD/FH3 domain. Residues 381 to 478 (LLEDAETKNA…EKKIHELEKQ (98 aa)) adopt a coiled-coil conformation. Positions 521–602 (PSSGPLPPPP…PSAPPLPGTS (82 aa)) are disordered. Pro residues-rich tracts occupy residues 524 to 534 (GPLPPPPPPLP), 548 to 576 (ATPP…PLPG), and 583 to 599 (PAPP…PPLP). Residues 617 to 1008 (IKKPIKTKFR…LMEKLLEQEA (392 aa)) enclose the FH2 domain.

This sequence belongs to the formin homology family. As to quaternary structure, interacts with TCP11L2; this interaction promotes muscle-derived satellite cell (MDSC) migration and differentiation.

It is found in the cytoplasm. Functionally, plays a role in the regulation of cell morphology and cytoskeletal organization. Required in the cortical actin filament dynamics. The chain is Formin-like protein 2 from Bos taurus (Bovine).